A 363-amino-acid chain; its full sequence is Glyceraldehyde-3-phosphate dehydrogenase, muscle (363 aa).

Positions 1-176 (MVKVGVNGFG…KYDKSLKIVS (176 aa)) are interaction with WARS. An N6,N6-dimethyllysine modification is found at K3. A Deamidated asparagine modification is found at N7. NAD(+)-binding positions include 11–12 (RI) and D33. Position 70 is a phosphotyrosine (Y70). An N6-acetyllysine modification is found at K89. Position 92 is a deamidated asparagine (N92). An N6,N6-dimethyllysine modification is found at K94. Deamidated asparagine is present on N98. T103 bears the Phosphothreonine mark. Residues R108 and S150 each contribute to the NAD(+) site. Phosphoserine is present on residues S150 and S176. N177 carries the deamidated asparagine modification. The residue at position 179 (S179) is a Phosphoserine. 179–181 (SCT) lines the D-glyceraldehyde 3-phosphate pocket. C180 functions as the Nucleophile in the catalytic mechanism. C180 carries the ADP-ribosylcysteine; by autocatalysis; in irreversibly inhibited form modification. At C180 the chain carries Cysteine persulfide. At C180 the chain carries S-(2-succinyl)cysteine. Position 180 is an S-nitrosocysteine; in reversibly inhibited form (C180). A Phosphothreonine modification is found at T181. Deamidated asparagine is present on N183. T205, T210, and T212 each carry phosphothreonine. D-glyceraldehyde 3-phosphate is bound at residue T210. K214 is covalently cross-linked (Glycyl lysine isopeptide (Lys-Gly) (interchain with G-Cter in SUMO2)). At K222 the chain carries N6,N6-dimethyllysine; alternate. K222 bears the N6-acetyllysine; alternate mark. K222 is modified (N6-malonyllysine; alternate). T239 carries the post-translational modification Phosphothreonine. 239-240 (TG) provides a ligand contact to D-glyceraldehyde 3-phosphate. An N6,N6-dimethyllysine; alternate modification is found at K243. K243 bears the N6-malonyllysine; alternate mark. An N6-acetyllysine modification is found at K247. A Deamidated asparagine modification is found at N253. At K255 the chain carries N6,N6-dimethyllysine; alternate. K255 is modified (N6-acetyllysine; alternate). Residue T257 is modified to Phosphothreonine. R262 serves as a coordination point for D-glyceraldehyde 3-phosphate. At T265 the chain carries Phosphothreonine. Residue S269 is modified to Phosphoserine. At C275 the chain carries S-(2-succinyl)cysteine. C275 is modified (S-nitrosocysteine). K282 carries the post-translational modification N6-acetyllysine. The residue at position 291 (K291) is an N6,N6-dimethyllysine. S340 bears the Phosphoserine mark. Deamidated asparagine is present on N344. Residue N344 coordinates NAD(+). Phosphoserine is present on S361. An N6,N6-dimethyllysine modification is found at K362.

It belongs to the glyceraldehyde-3-phosphate dehydrogenase family. As to quaternary structure, homotetramer. Interacts with TPPP; the interaction is direct. Interacts (when S-nitrosylated) with SIAH1; leading to nuclear translocation. Interacts with RILPL1/GOSPEL, leading to prevent the interaction between GAPDH and SIAH1 and prevent nuclear translocation. Interacts with CHP1; the interaction increases the binding of CHP1 with microtubules. Associates with microtubules. Interacts with EIF1AD, USP25, PRKCI and WARS1. Interacts with phosphorylated RPL13A; inhibited by oxidatively-modified low-densitity lipoprotein (LDL(ox)). Component of the GAIT complex. Interacts with FKBP6; leading to inhibit GAPDH catalytic activity. Interacts with TRAF2, promoting TRAF2 ubiquitination. Interacts with TRAF3, promoting TRAF3 ubiquitination. In terms of processing, ISGylated. Post-translationally, S-nitrosylation of Cys-180 leads to interaction with SIAH1, followed by translocation to the nucleus S-nitrosylation of Cys-275 is induced by interferon-gamma and LDL(ox) implicating the iNOS-S100A8/9 transnitrosylase complex and seems to prevent interaction with phosphorylated RPL13A and to interfere with GAIT complex activity. Sulfhydration at Cys-180 increases catalytic activity.

The protein resides in the cytoplasm. The protein localises to the cytosol. It is found in the cytoskeleton. It localises to the nucleus. It catalyses the reaction D-glyceraldehyde 3-phosphate + phosphate + NAD(+) = (2R)-3-phospho-glyceroyl phosphate + NADH + H(+). The catalysed reaction is S-nitroso-L-cysteinyl-[GAPDH] + L-cysteinyl-[protein] = L-cysteinyl-[GAPDH] + S-nitroso-L-cysteinyl-[protein]. It participates in carbohydrate degradation; glycolysis; pyruvate from D-glyceraldehyde 3-phosphate: step 1/5. Glyceraldehyde-3-phosphate dehydrogenase activity is inhibited by fumarate, via the formation of S-(2-succinyl)cysteine residues. Its function is as follows. Has both glyceraldehyde-3-phosphate dehydrogenase and nitrosylase activities, thereby playing a role in glycolysis and nuclear functions, respectively. Glyceraldehyde-3-phosphate dehydrogenase is a key enzyme in glycolysis that catalyzes the first step of the pathway by converting D-glyceraldehyde 3-phosphate (G3P) into 3-phospho-D-glyceroyl phosphate. Modulates the organization and assembly of the cytoskeleton. Facilitates the CHP1-dependent microtubule and membrane associations through its ability to stimulate the binding of CHP1 to microtubules. Component of the GAIT (gamma interferon-activated inhibitor of translation) complex which mediates interferon-gamma-induced transcript-selective translation inhibition in inflammation processes. Upon interferon-gamma treatment assembles into the GAIT complex which binds to stem loop-containing GAIT elements in the 3'-UTR of diverse inflammatory mRNAs (such as ceruplasmin) and suppresses their translation. Also plays a role in innate immunity by promoting TNF-induced NF-kappa-B activation and type I interferon production, via interaction with TRAF2 and TRAF3, respectively. Participates in nuclear events including transcription, RNA transport, DNA replication and apoptosis. Nuclear functions are probably due to the nitrosylase activity that mediates cysteine S-nitrosylation of nuclear target proteins such as SIRT1, HDAC2 and PRKDC. The protein is Glyceraldehyde-3-phosphate dehydrogenase, muscle of Jaculus orientalis (Greater Egyptian jerboa).